A 468-amino-acid chain; its full sequence is Chromosomal replication initiator protein DnaA (468 aa).

The domain I, interacts with DnaA modulators stretch occupies residues 1 to 84 (MSSSLWLQCL…RFEVGSRRVA (84 aa)). A domain II region spans residues 84 to 131 (AAPKPAPTRTPADVAAESSAPAQLQARKPVHKTWDDDAQVIADINHRS). Over residues 85–95 (APKPAPTRTPA) the composition is skewed to low complexity. Positions 85-104 (APKPAPTRTPADVAAESSAP) are disordered. The tract at residues 132 to 348 (NVNPKHKFNN…GALNRVIANA (217 aa)) is domain III, AAA+ region. The ATP site is built by glycine 176, glycine 178, lysine 179, and threonine 180. Residues 349–468 (NFTGRPITID…YSNLIRTLSS (120 aa)) form a domain IV, binds dsDNA region.

Belongs to the DnaA family. As to quaternary structure, oligomerizes as a right-handed, spiral filament on DNA at oriC.

The protein localises to the cytoplasm. In terms of biological role, plays an essential role in the initiation and regulation of chromosomal replication. ATP-DnaA binds to the origin of replication (oriC) to initiate formation of the DNA replication initiation complex once per cell cycle. Binds the DnaA box (a 9 base pair repeat at the origin) and separates the double-stranded (ds)DNA. Forms a right-handed helical filament on oriC DNA; dsDNA binds to the exterior of the filament while single-stranded (ss)DNA is stabiized in the filament's interior. The ATP-DnaA-oriC complex binds and stabilizes one strand of the AT-rich DNA unwinding element (DUE), permitting loading of DNA polymerase. After initiation quickly degrades to an ADP-DnaA complex that is not apt for DNA replication. Binds acidic phospholipids. Complements a temperature-sensitive E.coli mutant, the DnaA consensus is 5'-TT(A/T)TNCACA-3'. The protein is Chromosomal replication initiator protein DnaA of Vibrio harveyi (Beneckea harveyi).